The sequence spans 78 residues: Delta-conotoxin-like CVIE (78 aa).

A signal peptide spans 1–22 (MKLTCMMIVAVLFLTAWTFVTA). Residues 23 to 49 (DDSRNGLKNLFPKARHEMKNPEASKLN) constitute a propeptide that is removed on maturation. Cystine bridges form between Cys-54-Cys-69, Cys-61-Cys-73, and Cys-68-Cys-77. Position 65 is a 4-hydroxyproline (Pro-65).

This sequence belongs to the conotoxin O1 superfamily. Expressed by the venom duct.

It is found in the secreted. Functionally, delta-conotoxins bind to site 6 of voltage-gated sodium channels (Nav) and inhibit the inactivation process. The sequence is that of Delta-conotoxin-like CVIE from Conus catus (Cat cone).